Here is a 734-residue protein sequence, read N- to C-terminus: Cullin-4 (734 aa).

One can recognise a Cullin neddylation domain in the interval 666–728; sequence DRQFELQASI…KEYLEREDND (63 aa). Lys-680 is covalently cross-linked (Glycyl lysine isopeptide (Lys-Gly) (interchain with G-Cter in NEDD8)).

This sequence belongs to the cullin family. Component of the Clr4 methyltransferase complex (ClrC) composed of at least clr4, rik1, pcu4, rbx1, raf1 and raf2. The cullin pcu4, rik1, raf1, raf2 and the ring-box protein rbx1 are components of an E3 ubiquitin ligase, whose activity is essential for heterochromatin assembly. In terms of processing, neddylated; enhancing the ubiquitin-ligase activity.

The protein resides in the cytoplasm. It is found in the nucleus. The protein localises to the chromosome. It functions in the pathway protein modification; protein ubiquitination. Required, indirectly, for activation of ribonucleotide reductase through the degradation of the protein spd1, thereby supplying deoxyribonucleotides for DNA replication and repair. Also has a role as a scaffold for assembling ubiquitin ligases. Component of the Clr4 methyltransferase complex (ClrC) which contributes to the establishment of heterochromatin by specifically methylating histone H3 to form H3K9me. ClrC preferentially ubiquitylates H3K14 and ClrC-mediated H3 ubiquitination promotes clr4 methyltransferase activity for the methylation of H3K9. H3K9me represents a specific tag for epigenetic transcriptional repression by recruiting swi6/HP1 to methylated histones which leads to transcriptional silencing within centromeric heterochromatin, telomeric regions and at the silent mating-type loci. This is Cullin-4 (pcu4) from Schizosaccharomyces pombe (strain 972 / ATCC 24843) (Fission yeast).